The primary structure comprises 373 residues: Spore coat polysaccharide biosynthesis protein SpsE (373 aa).

Residues 305 to 367 enclose the AFP-like domain; the sequence is GIFTTAPIQK…GIVWDDILLK (63 aa).

It participates in spore coat biogenesis; spore coat polysaccharide biosynthesis. The chain is Spore coat polysaccharide biosynthesis protein SpsE (spsE) from Bacillus subtilis (strain 168).